The primary structure comprises 641 residues: Fructose-1,6-bisphosphatase class 3 (641 aa).

It belongs to the FBPase class 3 family. Mn(2+) is required as a cofactor.

It catalyses the reaction beta-D-fructose 1,6-bisphosphate + H2O = beta-D-fructose 6-phosphate + phosphate. It functions in the pathway carbohydrate biosynthesis; gluconeogenesis. The protein is Fructose-1,6-bisphosphatase class 3 of Latilactobacillus sakei subsp. sakei (strain 23K) (Lactobacillus sakei subsp. sakei).